A 39-amino-acid chain; its full sequence is RGCIELGEDCDGSKDDCQCCRDNGFCSCYTFPYKWGCIC.

Disulfide bonds are present. Expressed by the venom gland.

The protein resides in the secreted. Omega-agatoxins are antagonists of voltage-gated calcium channels (Cav). The chain is U2-ctenitoxin-Co1a from Ctenus ornatus (Brazilian spider).